Here is a 341-residue protein sequence, read N- to C-terminus: Anthranilate phosphoribosyltransferase (341 aa).

5-phospho-alpha-D-ribose 1-diphosphate-binding positions include G79, 82 to 83 (GD), T87, 89 to 92 (NIST), 107 to 115 (KHGNRAVSS), and S119. G79 serves as a coordination point for anthranilate. S91 provides a ligand contact to Mg(2+). Residue N110 coordinates anthranilate. R165 serves as a coordination point for anthranilate. The Mg(2+) site is built by D224 and E225.

The protein belongs to the anthranilate phosphoribosyltransferase family. In terms of assembly, homodimer. Mg(2+) is required as a cofactor.

The enzyme catalyses N-(5-phospho-beta-D-ribosyl)anthranilate + diphosphate = 5-phospho-alpha-D-ribose 1-diphosphate + anthranilate. It participates in amino-acid biosynthesis; L-tryptophan biosynthesis; L-tryptophan from chorismate: step 2/5. Functionally, catalyzes the transfer of the phosphoribosyl group of 5-phosphorylribose-1-pyrophosphate (PRPP) to anthranilate to yield N-(5'-phosphoribosyl)-anthranilate (PRA). This chain is Anthranilate phosphoribosyltransferase, found in Bacillus cereus (strain AH820).